The following is a 362-amino-acid chain: Protein RecA (362 aa).

Position 65–72 (65–72 (GPESSGKT)) interacts with ATP. The interval 323–362 (RVANGMEPLNEKSTKETADDKASGKTGENKQETIEEASKE) is disordered. A compositionally biased stretch (basic and acidic residues) spans 331 to 362 (LNEKSTKETADDKASGKTGENKQETIEEASKE).

It belongs to the RecA family.

Its subcellular location is the cytoplasm. Functionally, can catalyze the hydrolysis of ATP in the presence of single-stranded DNA, the ATP-dependent uptake of single-stranded DNA by duplex DNA, and the ATP-dependent hybridization of homologous single-stranded DNAs. It interacts with LexA causing its activation and leading to its autocatalytic cleavage. The protein is Protein RecA of Limosilactobacillus reuteri (strain DSM 20016) (Lactobacillus reuteri).